A 251-amino-acid chain; its full sequence is 2-C-methyl-D-erythritol 4-phosphate cytidylyltransferase (251 aa).

The protein belongs to the IspD/TarI cytidylyltransferase family. IspD subfamily.

The enzyme catalyses 2-C-methyl-D-erythritol 4-phosphate + CTP + H(+) = 4-CDP-2-C-methyl-D-erythritol + diphosphate. It functions in the pathway isoprenoid biosynthesis; isopentenyl diphosphate biosynthesis via DXP pathway; isopentenyl diphosphate from 1-deoxy-D-xylulose 5-phosphate: step 2/6. In terms of biological role, catalyzes the formation of 4-diphosphocytidyl-2-C-methyl-D-erythritol from CTP and 2-C-methyl-D-erythritol 4-phosphate (MEP). The polypeptide is 2-C-methyl-D-erythritol 4-phosphate cytidylyltransferase (Cupriavidus pinatubonensis (strain JMP 134 / LMG 1197) (Cupriavidus necator (strain JMP 134))).